Here is a 675-residue protein sequence, read N- to C-terminus: Polyphosphate kinase (675 aa).

Residue Asn42 coordinates ATP. Residues Arg372 and Arg401 each contribute to the Mg(2+) site. The active-site Phosphohistidine intermediate is the His431. Residues Tyr464, Arg558, and His586 each coordinate ATP.

Belongs to the polyphosphate kinase 1 (PPK1) family. Mg(2+) is required as a cofactor. An intermediate of this reaction is the autophosphorylated ppk in which a phosphate is covalently linked to a histidine residue through a N-P bond.

It carries out the reaction [phosphate](n) + ATP = [phosphate](n+1) + ADP. Catalyzes the reversible transfer of the terminal phosphate of ATP to form a long-chain polyphosphate (polyP). The sequence is that of Polyphosphate kinase from Helicobacter pylori (strain J99 / ATCC 700824) (Campylobacter pylori J99).